We begin with the raw amino-acid sequence, 498 residues long: MFNYERPKHFIQSQNPCGSRLQPPGPETSSFSSQTKQSSIIIQPRQCTEQRFSASSTLSSHITMSSSAFPASPKQHAGSNPGQRVTTTYNQSPASFLSSILPSQPDYNSSKIPSAMDSNYQQSSAGQPINAKPSQTANAKPIPRTPDHEIQGSKEALIQDLERKLKCKDTLLHNGNQRLTYEEKMARRLLGPQNAAAVFQAQDDSGAQDSQQHNSEHARLQVPTSQVRSRSTSRGDVNDQDAIQEKFYPPRFIQVPENMSIDEGRFCRMDFKVSGLPAPDVSWYLNGRTVQSDDLHKMIVSEKGLHSLIFEVVRASDAGAYACVAKNRAGEATFTVQLDVLAKEHKRAPMFIYKPQSKKVLEGDSVKLECQISAIPPPKLFWKRNNEMVQFNTDRISLYQDNTGRVTLLIKDVNKKDAGWYTVSAVNEAGVTTCNTRLDVTARPNQTLPAPKQLRVRPTFSKYLALNGKGLNVKQAFNPEGEFQRLAAQSGLYESEEL.

3 disordered regions span residues 1-46 (MFNY…QPRQ), 64-151 (MSSS…HEIQ), and 202-241 (QDDSGAQDSQQHNSEHARLQVPTSQVRSRSTSRGDVNDQD). R20 carries the omega-N-methylarginine modification. The span at 29–43 (SSFSSQTKQSSIIIQ) shows a compositional bias: low complexity. The segment covering 77–138 (AGSNPGQRVT…INAKPSQTAN (62 aa)) has biased composition (polar residues). The tract at residues 79 to 150 (SNPGQRVTTT…PIPRTPDHEI (72 aa)) is necessary for interaction with ACTN1. Residues 202–212 (QDDSGAQDSQQ) show a composition bias toward low complexity. Residues 215 to 493 (SEHARLQVPT…QRLAAQSGLY (279 aa)) are necessary for interaction with FLNC. Positions 215–498 (SEHARLQVPT…QSGLYESEEL (284 aa)) are necessary for interaction with ACTA1. The span at 222–235 (VPTSQVRSRSTSRG) shows a compositional bias: polar residues. 2 Ig-like C2-type domains span residues 250–335 (PRFI…ATFT) and 349–441 (PMFI…LDVT).

The protein belongs to the myotilin/palladin family. As to quaternary structure, homodimer. Interacts with ACTA1, ACTN1, FLNA, FLNB, FLNC and MYOZ2. Interacts with the C-terminal region of MYOZ1. Expressed in skeletal muscle (at protein level). Expressed in skeletal muscle, heart, bone marrow and thyroid gland.

It is found in the cell membrane. The protein localises to the sarcolemma. The protein resides in the cytoplasm. Its subcellular location is the cytoskeleton. It localises to the myofibril. It is found in the sarcomere. The protein localises to the z line. Its function is as follows. Component of a complex of multiple actin cross-linking proteins. Involved in the control of myofibril assembly and stability at the Z lines in muscle cells. This Homo sapiens (Human) protein is Myotilin (MYOT).